The primary structure comprises 132 residues: Small ribosomal subunit protein uS9 (132 aa).

This sequence belongs to the universal ribosomal protein uS9 family.

The chain is Small ribosomal subunit protein uS9 (rps9) from Thermoplasma volcanium (strain ATCC 51530 / DSM 4299 / JCM 9571 / NBRC 15438 / GSS1).